A 110-amino-acid polypeptide reads, in one-letter code: UPF0122 protein lin1916 (110 aa).

The protein belongs to the UPF0122 family.

Its function is as follows. Might take part in the signal recognition particle (SRP) pathway. This is inferred from the conservation of its genetic proximity to ftsY/ffh. May be a regulatory protein. This is UPF0122 protein lin1916 from Listeria innocua serovar 6a (strain ATCC BAA-680 / CLIP 11262).